A 744-amino-acid chain; its full sequence is Tripartite motif-containing protein 2 (744 aa).

Phosphoserine is present on serine 10. The segment at 23 to 64 (CSICLERYKNPKVLPCLHTFCERCLQNYIPAHSLTLSCPVCR) adopts an RING-type zinc-finger fold. The segment at 113-154 (GKPLSCPNHDGNVMDFYCQSCETAMCRECTEGEHAEHPTVPL) adopts a B box-type zinc-finger fold. Zn(2+) is bound by residues cysteine 118, histidine 121, cysteine 141, and histidine 146. Residues 320–421 (TTNAVASETV…IRGSPFKLKV (102 aa)) form a Filamin repeat. The residue at position 371 (threonine 371) is a Phosphothreonine. Serine 375, serine 424, and serine 428 each carry phosphoserine. The tract at residues 432-462 (EGVKRRVKSPGSGHVKQKAVKRPASMYSTGK) is disordered. NHL repeat units lie at residues 473 to 516 (IFRV…FSND), 520 to 563 (KSRF…FSSD), 564 to 605 (GKFK…FQPN), 609 to 652 (VTRF…FNQE), 656 to 699 (MLKF…FDGS), and 700 to 743 (GSFL…YRYL).

This sequence belongs to the TRIM/RBCC family. Forms homooligomers. Interacts with TRIM3; this interaction reduces TRIM2 activity. Interacts with myosin V; myosin V may not be a substrate for ubiquitination. Interacts with NEFL. Interacts with phosphorylated BCL2L11. Interacts with SIRPA. In terms of processing, RING-type zinc finger-dependent and UBE2D1-dependent autoubiquitination.

It is found in the cytoplasm. It carries out the reaction S-ubiquitinyl-[E2 ubiquitin-conjugating enzyme]-L-cysteine + [acceptor protein]-L-lysine = [E2 ubiquitin-conjugating enzyme]-L-cysteine + N(6)-ubiquitinyl-[acceptor protein]-L-lysine.. It functions in the pathway protein modification; protein ubiquitination. Functionally, UBE2D1-dependent E3 ubiquitin-protein ligase that mediates the ubiquitination of NEFL and of phosphorylated BCL2L11. Plays a neuroprotective function. May play a role in neuronal rapid ischemic tolerance. Plays a role in antiviral immunity and limits New World arenavirus infection independently of its ubiquitin ligase activity. This is Tripartite motif-containing protein 2 (TRIM2) from Ailuropoda melanoleuca (Giant panda).